The following is a 61-amino-acid chain: Small ribosomal subunit protein uS14 (61 aa).

C24, C27, C40, and C43 together coordinate Zn(2+).

The protein belongs to the universal ribosomal protein uS14 family. Zinc-binding uS14 subfamily. As to quaternary structure, part of the 30S ribosomal subunit. Contacts proteins S3 and S10. Zn(2+) is required as a cofactor.

Functionally, binds 16S rRNA, required for the assembly of 30S particles and may also be responsible for determining the conformation of the 16S rRNA at the A site. The polypeptide is Small ribosomal subunit protein uS14 (Aliarcobacter butzleri (strain RM4018) (Arcobacter butzleri)).